The sequence spans 152 residues: MSKRLQVVLNQDVRKLGNNGDLVEVAPGYARNYLLPQGIASLATPGILRQVEQRREKERQRLLAELQDAEARKVALKTVGKLIIRKQVGEENQIFGTVTTQDVADAIKERAGQDVDRRGITLPEIGKTGSYEAQVKLHPEVTATVQFDVIPL.

This sequence belongs to the bacterial ribosomal protein bL9 family.

Binds to the 23S rRNA. The polypeptide is Large ribosomal subunit protein bL9 (Picosynechococcus sp. (strain ATCC 27264 / PCC 7002 / PR-6) (Agmenellum quadruplicatum)).